The sequence spans 151 residues: Large ribosomal subunit protein bL9 (151 aa).

The protein belongs to the bacterial ribosomal protein bL9 family.

In terms of biological role, binds to the 23S rRNA. The chain is Large ribosomal subunit protein bL9 from Thermosipho africanus (strain TCF52B).